Here is a 260-residue protein sequence, read N- to C-terminus: DNA import protein CedA (260 aa).

6 helical membrane-spanning segments follow: residues 13-33 (LLAS…VPVY), 47-67 (IYVV…GELL), 110-130 (ALIQ…ALTF), 140-160 (IVYQ…SIPF), 169-189 (AFIG…QFLA), and 220-240 (IITS…GFSM).

Forms a complex composed of CedA, CedA1 and CedA2.

Its subcellular location is the cell membrane. Its function is as follows. Part of the Ced system, which is involved in DNA import. The polypeptide is DNA import protein CedA (Sulfolobus acidocaldarius (strain ATCC 33909 / DSM 639 / JCM 8929 / NBRC 15157 / NCIMB 11770)).